A 946-amino-acid polypeptide reads, in one-letter code: Multiple C2 and transmembrane domain-containing protein 1 (946 aa).

Disordered regions lie at residues 28–193 (QLGV…QKSS) and 205–229 (LEPA…KGEE). A compositionally biased stretch (gly residues) spans 31-43 (VGKGKGGGGGRAG). Positions 87–96 (FSSSQPNLCC) are enriched in polar residues. Over residues 143–163 (PGGRSPDSAPSSSASSSLSSS) the composition is skewed to low complexity. Residues 169-187 (RGDRIRDEGTRRGSPEAHL) show a composition bias toward basic and acidic residues. C2 domains are found at residues 235–353 (KINP…DVTL), 399–516 (QTQS…KLEL), and 550–671 (HKER…AYVL). Ca(2+) is bound by residues D270, D276, D323, D325, D331, D433, D439, D486, D488, D494, D589, D595, D641, D643, and D649. Transmembrane regions (helical) follow at residues 758-778 (FVLF…LLLL) and 861-881 (PFLS…LYFI).

This sequence belongs to the MCTP family. Requires Ca(2+) as cofactor. As to expression, expressed in the brain and central nervous system (at protein level). Isoform 1 and isoform 2 are expressed in the brain, kidney, liver, heart, lung, skeletal muscle, testis and spleen. Isoform 2 shows a higher expression in the brain, heart and skeletal muscle.

The protein resides in the cytoplasmic vesicle. Its subcellular location is the secretory vesicle. It is found in the synaptic vesicle membrane. It localises to the recycling endosome. The protein localises to the endoplasmic reticulum membrane. Functionally, calcium sensor which is essential for the stabilization of normal baseline neurotransmitter release and for the induction and long-term maintenance of presynaptic homeostatic plasticity. Overexpression in cultured neurons significantly inhibits neuronal transferrin endocytosis, secretory vesicle retrieval, cell migration, and oxidative stress from glutamate toxicity. The polypeptide is Multiple C2 and transmembrane domain-containing protein 1 (Rattus norvegicus (Rat)).